Consider the following 23-residue polypeptide: Basic phospholipase A2 CB2 (23 aa).

Requires Ca(2+) as cofactor. Post-translationally, contains 7 disulfide bonds. As to expression, expressed by the venom gland.

The protein resides in the secreted. The catalysed reaction is a 1,2-diacyl-sn-glycero-3-phosphocholine + H2O = a 1-acyl-sn-glycero-3-phosphocholine + a fatty acid + H(+). In terms of biological role, snake venom phospholipase A2 (PLA2) that shows presynaptic neurotoxicity. PLA2 catalyzes the calcium-dependent hydrolysis of the 2-acyl groups in 3-sn-phosphoglycerides. This chain is Basic phospholipase A2 CB2, found in Crotalus durissus cumanensis (South American rattlesnake).